A 1010-amino-acid polypeptide reads, in one-letter code: Translation initiation factor IF-2 (1010 aa).

Disordered regions lie at residues 54–350 (KGLA…FEDD) and 364–420 (PSFT…RPES). Residues 57–70 (ASSTSKNSTGQRES) are compositionally biased toward polar residues. Pro residues predominate over residues 112–124 (ISPPRPPVKPLVA). A compositionally biased stretch (polar residues) spans 145–155 (HSPSVKETPTE). The span at 200 to 258 (DRPRGEKRERGESENAPSPERRVGLAKPEKPTLNRKPDGKSPKLAEPAREVRETVELKR) shows a compositional bias: basic and acidic residues. Low complexity predominate over residues 378–389 (TAKAAPPGTPTA). Over residues 406–419 (KSERQEPQEEKRPE) the composition is skewed to basic and acidic residues. A tr-type G domain is found at 502 to 675 (RRPPVVTIMG…LLVAEVEELV (174 aa)). The G1 stretch occupies residues 511–518 (GHVDHGKT). GTP is bound at residue 511-518 (GHVDHGKT). Residues 536 to 540 (GITQH) are G2. Positions 561 to 564 (DTPG) are G3. GTP is bound by residues 561 to 565 (DTPGH) and 615 to 618 (NKVD). Residues 615 to 618 (NKVD) are G4. The G5 stretch occupies residues 651–653 (SAL).

It belongs to the TRAFAC class translation factor GTPase superfamily. Classic translation factor GTPase family. IF-2 subfamily.

It is found in the cytoplasm. Functionally, one of the essential components for the initiation of protein synthesis. Protects formylmethionyl-tRNA from spontaneous hydrolysis and promotes its binding to the 30S ribosomal subunits. Also involved in the hydrolysis of GTP during the formation of the 70S ribosomal complex. The polypeptide is Translation initiation factor IF-2 (Microcystis aeruginosa (strain NIES-843 / IAM M-2473)).